The sequence spans 2510 residues: MAPGRTDVTVAENGNGLHTAHNGVSNGTSNGTNGTSHTSNGTNSSAKTTSNGVHSHEDIPIAIVGMGLRLPGGIGTEEDLWDTLINKKDQRQRVPADRWNVDAFYSKTNKRGTVKTEHGYFLADEDLQQFDTSFFSITRNELEKLDPQHRLLLEVTRECLENAGELDWRGKDIGCYVGVFGEDWLDLHAKDSQDFGIYRITGAGDFVLANRISYEYDLKGPSITVKTACSSALICLHMACDAIRSGEISSAIVGGANLLMSPTMTIAMSEQGVLSGDGSCKTFDAAADGYARAEAVNALYVKRLDHAIRDGNPIRGIVRGTGSNCDGKTAGLSHPSPESHEALIRRTYQQAGIDDFCQTAFVECHGTGTATGDPLETSAIGNVFGEKGVYITSVKPNVGHSEGASGITSCIKAILAMEKKTIPPNIKFNNPNPQIPFKKAKLQVPVEPTPWPQDRQERVSINAFGIGGANAHAVIDSAESYGVNSMRATRSSTEPLRQSLVVFSSNHMNSARNGTANLQKYLTKHPGSVKDLAYTTGVRRERLPYRSFAVSDGSAPLEFTAPSRTPATTPGVTFVFTGQGAQWATMGVNLLEEFPSAEEDFKNLDKALSQLPYPPSWSIADELLRSKEESRLDQAEFSQPLCTAVQVVIVNLLRAWNISPSRVIGHSSGELAAAYASGAITAAEAIIGAYYRGLVTKQQARPGAMAAVGFGREDVASYLTEGVTIACENSPESTTLSGDADKIDAVIAKIKESHPDVLARRLRVEMAYHSYHMADVGTRYQELLEPHVSSTRPDVPFYSTVLEKVITEKSAMNASYWRRNMESPVLFNTTMAKLLTDECANNLFLEIGPHSALAGPLRQIFKKHQPDALYVPTLVRGQNDTTSLLSTAGNLFVKGLAVDIGAVNDGGSILTDLPTYPWHHEDTFWDESRLTREWRKRKFPRHDLLGCQVFEGSSLEPTWRNMLCLEDVPWIRDHVIGPDIVFPGAGYIAMAGEAIRQVADAQDYTVRNLSVKSAMILHEPVTTEILFSLRPHRLTTSLDSAWYEFTVSSHNGTGWTKHCTGQVKAGRADSGSVSEPPQATTLPRKVSSTRWYQTMSKVGINYGPTFQGLEDVSAHPVNNFAVAKVTNTVDPNESTYQLHPTTTDYAIQLFSVAAWKGQARDFVQMPLPAYFGEVYMKRPQTNEQLQLSSNVTVTARGAVHGDGFATVGGEVVLEFRNLRLAPAADDTGGDDQDPHAGVRLQWKPDVAFLDSKDLIRTTKSIRSCYPTVQRLLLLCSIECTERLASLPPSGVEHLEKFKTWLAAHVEQAKADGYEAVDDVNSLFALSRDDRLSLIETTAQEVKASYAEAVGNAICRVFENVEGIFTSEADALDLLMQDDILRKIYDLVIEFWDFKDFLGLVSHDKPNLKVLEIGAGTGATTALILDGLVSELGEQMFYSYTYTDISAGFFVQAKERFKNVHSIEYAVLDISQDPAEQGFELGSYDLVIATNVLHATPSLQETLVNVRKLLQPKGKLMLQELCSSTKWFNFIVGVLPGWWLGEPDGRPEEPYVGPERWARELTQAGFDGAEAVIYDEEKPYHTNATIIAHPLVEPKVNKKISILTTDPNGAAATLLAQSLTRQNFMVDFCSFQDAPQSDHDIISVLDLEGRPFLADISADKFHSLQTFITKLSSSGMLWLTKSAQMNSSEPEYAQIVGLARSVRNELSIDLATVEMDNTQDETTFNRVINILSKFQNRSKNLDIDPEFEYAISNGVINISRFHWISVSNELAAGTDSTAPKTLEIGKRGSLKTLRWVQRSEIKLIGDEVAVEVRAAGMNFKDILISMGIVDGNVDDGNGLGCECAGVVTQVGPDAPFHVGDRVAIIGGDSYSTVLKTTSTLCARIPDNLSFEDAATMPCVYTTVIHSLLDLAKIEKDQTVLIQSACGGIGIAAINICRMIFATVGSQEKIDYLMSTFGIPRNHIFNSRNSSFLPDVMRETSGVGVDVVLNSLSGDLLHASWKCVAEFGKMVEIGKRDFIGQGKLAMEAFEANRTFYGVDFAPIAEKRPYIIKRLLERTMEFFRLGAIQPIRPIKFFDATQIEDALRYMQKGQHMGKLVIQFPTDHSQLTSSRGNNRLVLRSDASYLLVGGLGGLGRSISTWMVEHGARHFIYLSRSGGKGPDDAAFVQEMNAAGCTVQITAGSVANLADVQRAINQAEYPVAGVLQMSMVLRDASFPNMTHDEWQAANLPKIKGTWNLHEAFASQPLDFFVLFSSFSGLLGHWGQANYAAANTFLDAFAQYRHGLGLPASVLDISIIEDVGWVSQEPGHLEQLKATAAYCLKEQHLLDSLELAITKSAPQTWEPKSPMDGYMNASQIGLGMRMTMPIAADANRCIWKRDIRMGLYRNLENSGVDDAGTGNEGLREFLTGVTTNPESLKEPSSVSFLANEIGSTLFSFLMRPIEELDVKQPLSAVGLDSLVAIELRNWSRQRLGVELSVLEILGAASIEKLGEAAAEGLLVKLGGATTNGDAQ.

Residues 1-54 (MAPGRTDVTVAENGNGLHTAHNGVSNGTSNGTNGTSHTSNGTNSSAKTTSNGVH) form a disordered region. A compositionally biased stretch (low complexity) spans 22–45 (NGVSNGTSNGTNGTSHTSNGTNSS). Residues 58-477 (DIPIAIVGMG…GANAHAVIDS (420 aa)) form the Ketosynthase family 3 (KS3) domain. Active-site for beta-ketoacyl synthase activity residues include Cys-229, His-365, and His-400. The segment at 574-880 (FVFTGQGAQW…VPTLVRGQND (307 aa)) is malonyl-CoA:ACP transacylase (MAT) domain. The tract at residues 942–1070 (HDLLGCQVFE…GQVKAGRADS (129 aa)) is N-terminal hotdog fold. A dehydratase (DH) domain region spans residues 942-1226 (HDLLGCQVFE…NLRLAPAADD (285 aa)). Positions 942-1229 (HDLLGCQVFE…LAPAADDTGG (288 aa)) constitute a PKS/mFAS DH domain. His-974 acts as the Proton acceptor; for dehydratase activity in catalysis. The segment at 1083–1229 (PRKVSSTRWY…LAPAADDTGG (147 aa)) is C-terminal hotdog fold. Catalysis depends on Asp-1144, which acts as the Proton donor; for dehydratase activity. Residues 1395-1574 (DFLGLVSHDK…FDGAEAVIYD (180 aa)) form a methyltransferase (CMet) domain region. The tract at residues 1787–2097 (GSLKTLRWVQ…KGQHMGKLVI (311 aa)) is enoyl reductase (ER) (ER) domain. Positions 2122–2296 (SYLLVGGLGG…ASVLDISIIE (175 aa)) are ketoreductase (KR) domain. The 78-residue stretch at 2419–2496 (SSVSFLANEI…KLGEAAAEGL (78 aa)) folds into the Carrier domain. Ser-2456 carries the post-translational modification O-(pantetheine 4'-phosphoryl)serine.

It functions in the pathway mycotoxin biosynthesis. Its function is as follows. Highly reducing polyketide synthase; part of the gene cluster that mediates the biosynthesis of 1233A, a natural compound known as an inhibitor of HMG-CoA synthase in the mevalonate pathway and with antibacterial and antifungal activities. The highly reducing polyketide synthase g433 gene is responsible for the 1233A backbone biosynthesis and the cytochrome P450 monooxygenase g430 catalyzes oxidation of the backbone. The chain is Highly reducing polyketide synthase g433 from Fusarium sp.